The primary structure comprises 311 residues: Taste receptor type 2 member 9 (311 aa).

Topologically, residues 1 to 9 (MPSTIEAIY) are extracellular. The helical transmembrane segment at 10–32 (IILIAGELTIGIWGNGFIVLVNC) threads the bilayer. The Cytoplasmic segment spans residues 33 to 52 (IDWLKRRDVSLIDIILISLA). The chain crosses the membrane as a helical span at residues 53–72 (ISRICLLCVISLDGFFILLF). Over 73-86 (PGTYDTNVLESIMD) the chain is Extracellular. A helical membrane pass occupies residues 87–109 (AVWTFANNSSLWFTSCLSIFYLL). The Cytoplasmic portion of the chain corresponds to 110-128 (KIANISHPFFFWLKLKINK). The helical transmembrane segment at 129-146 (VILAILLGSFLISLIISF) threads the bilayer. Residues 147-179 (PINGMWYNLFKVSHEENITWAFKVSTIPGAFKQ) are Extracellular-facing. A glycan (N-linked (GlcNAc...) asparagine) is linked at asparagine 163. Residues 180 to 202 (LTLNLGAMVPFILCLISFFLLLF) form a helical membrane-spanning segment. Topologically, residues 203–233 (SLVRHTKQIQLHATGFRDPSTEAHMRAVKAV) are cytoplasmic. A helical transmembrane segment spans residues 234-256 (IIFLLLLILYYPVFLVMTSSTLI). Over 257–260 (PQGK) the chain is Extracellular. Residues 261 to 283 (LVLMIGDIVTVIFPSSHSFILIM) form a helical membrane-spanning segment. Residues 284-311 (GNSKLRAAFLKMLRFVKGFLRRRKPFVP) are Cytoplasmic-facing.

It belongs to the G-protein coupled receptor T2R family.

It is found in the membrane. Functionally, gustducin-coupled receptor implicated in the perception of bitter compounds in the oral cavity and the gastrointestinal tract. Signals through PLCB2 and the calcium-regulated cation channel TRPM5. This Macaca mulatta (Rhesus macaque) protein is Taste receptor type 2 member 9 (TAS2R9).